Consider the following 76-residue polypeptide: Kappa-actitoxin-Avd4g (76 aa).

Residues 1-19 (MNKALFLCLVVLCAAVVFA) form the signal peptide. Positions 20–31 (AEDLQKAKHAPF) are excised as a propeptide. Intrachain disulfides connect C37/C72, C39/C65, and C55/C73.

The protein belongs to the sea anemone type 3 (BDS) potassium channel toxin family. Moderately expressed in the ectodermal tissue from the distal and proximal tentacles, body wall, and oral disk.

It is found in the secreted. The protein resides in the nematocyst. Its function is as follows. Blocks Kv3 voltage-gated potassium channels. Reduces blood pressure. The chain is Kappa-actitoxin-Avd4g from Anemonia viridis (Snakelocks anemone).